The sequence spans 177 residues: Translation initiation factor IF-3 (177 aa).

The protein belongs to the IF-3 family. As to quaternary structure, monomer.

It localises to the cytoplasm. Its function is as follows. IF-3 binds to the 30S ribosomal subunit and shifts the equilibrium between 70S ribosomes and their 50S and 30S subunits in favor of the free subunits, thus enhancing the availability of 30S subunits on which protein synthesis initiation begins. The sequence is that of Translation initiation factor IF-3 from Clostridium perfringens (strain 13 / Type A).